The primary structure comprises 418 residues: UDP-N-acetylglucosamine 1-carboxyvinyltransferase 1 (418 aa).

Residue 22–23 (KN) coordinates phosphoenolpyruvate. UDP-N-acetyl-alpha-D-glucosamine is bound at residue R94. C118 serves as the catalytic Proton donor. Position 118 is a 2-(S-cysteinyl)pyruvic acid O-phosphothioketal (C118). UDP-N-acetyl-alpha-D-glucosamine contacts are provided by residues 123–127 (RPIDL), D306, and I328.

The protein belongs to the EPSP synthase family. MurA subfamily.

Its subcellular location is the cytoplasm. It carries out the reaction phosphoenolpyruvate + UDP-N-acetyl-alpha-D-glucosamine = UDP-N-acetyl-3-O-(1-carboxyvinyl)-alpha-D-glucosamine + phosphate. Its pathway is cell wall biogenesis; peptidoglycan biosynthesis. Cell wall formation. Adds enolpyruvyl to UDP-N-acetylglucosamine. This is UDP-N-acetylglucosamine 1-carboxyvinyltransferase 1 from Clostridium acetobutylicum (strain ATCC 824 / DSM 792 / JCM 1419 / IAM 19013 / LMG 5710 / NBRC 13948 / NRRL B-527 / VKM B-1787 / 2291 / W).